Reading from the N-terminus, the 938-residue chain is Protein translocase subunit SecA (938 aa).

Residues Q90, 108 to 112 (GEGKT), and D504 each bind ATP.

This sequence belongs to the SecA family. Monomer and homodimer. Part of the essential Sec protein translocation apparatus which comprises SecA, SecYEG and auxiliary proteins SecDF. Other proteins may also be involved.

The protein resides in the cell inner membrane. It is found in the cellular thylakoid membrane. It localises to the cytoplasm. It catalyses the reaction ATP + H2O + cellular proteinSide 1 = ADP + phosphate + cellular proteinSide 2.. Its function is as follows. Part of the Sec protein translocase complex. Interacts with the SecYEG preprotein conducting channel. Has a central role in coupling the hydrolysis of ATP to the transfer of proteins into and across the cell membrane, serving as an ATP-driven molecular motor driving the stepwise translocation of polypeptide chains across the membrane. Probably participates in protein translocation into and across both the cytoplasmic and thylakoid membranes in cyanobacterial cells. This is Protein translocase subunit SecA from Picosynechococcus sp. (strain ATCC 27264 / PCC 7002 / PR-6) (Agmenellum quadruplicatum).